A 482-amino-acid chain; its full sequence is Ribosomal RNA small subunit methyltransferase F (482 aa).

Residues 119-125, glutamate 143, aspartate 170, and aspartate 188 contribute to the S-adenosyl-L-methionine site; that span reads ASAPGSK. The active-site Nucleophile is the cysteine 241.

It belongs to the class I-like SAM-binding methyltransferase superfamily. RsmB/NOP family.

It is found in the cytoplasm. It carries out the reaction cytidine(1407) in 16S rRNA + S-adenosyl-L-methionine = 5-methylcytidine(1407) in 16S rRNA + S-adenosyl-L-homocysteine + H(+). Its function is as follows. Specifically methylates the cytosine at position 1407 (m5C1407) of 16S rRNA. In Shewanella sp. (strain MR-7), this protein is Ribosomal RNA small subunit methyltransferase F.